A 481-amino-acid chain; its full sequence is 6-phosphogluconate dehydrogenase, decarboxylating (481 aa).

NADP(+)-binding positions include 11–16 (GLAVMG), 34–36 (NRT), 76–78 (VKA), and asparagine 104. Substrate is bound by residues asparagine 104 and 130–132 (SGG). The active-site Proton acceptor is lysine 184. Residue 187–188 (HN) coordinates substrate. Glutamate 191 (proton donor) is an active-site residue. Substrate is bound by residues tyrosine 192, lysine 259, arginine 286, arginine 445, and histidine 451.

The protein belongs to the 6-phosphogluconate dehydrogenase family. As to quaternary structure, homodimer.

It catalyses the reaction 6-phospho-D-gluconate + NADP(+) = D-ribulose 5-phosphate + CO2 + NADPH. It functions in the pathway carbohydrate degradation; pentose phosphate pathway; D-ribulose 5-phosphate from D-glucose 6-phosphate (oxidative stage): step 3/3. In terms of biological role, catalyzes the oxidative decarboxylation of 6-phosphogluconate to ribulose 5-phosphate and CO(2), with concomitant reduction of NADP to NADPH. The chain is 6-phosphogluconate dehydrogenase, decarboxylating (Pgd) from Drosophila melanogaster (Fruit fly).